The primary structure comprises 456 residues: Enolase (456 aa).

Position 169 (Gln169) interacts with (2R)-2-phosphoglycerate. Residue Glu211 is the Proton donor of the active site. Residues Asp252, Glu314, and Asp341 each coordinate Mg(2+). Lys366, Arg395, Ser396, and Lys417 together coordinate (2R)-2-phosphoglycerate. Lys366 (proton acceptor) is an active-site residue.

It belongs to the enolase family. Mg(2+) is required as a cofactor.

The protein resides in the cytoplasm. Its subcellular location is the secreted. The protein localises to the cell surface. It carries out the reaction (2R)-2-phosphoglycerate = phosphoenolpyruvate + H2O. Its pathway is carbohydrate degradation; glycolysis; pyruvate from D-glyceraldehyde 3-phosphate: step 4/5. Its function is as follows. Catalyzes the reversible conversion of 2-phosphoglycerate (2-PG) into phosphoenolpyruvate (PEP). It is essential for the degradation of carbohydrates via glycolysis. The chain is Enolase from Metamycoplasma arthritidis (strain 158L3-1) (Mycoplasma arthritidis).